The chain runs to 473 residues: Photosystem II CP43 reaction center protein (473 aa).

Residues 1–14 (MKTLYSLRRFYPVE) constitute a propeptide that is removed on maturation. At threonine 15 the chain carries N-acetylthreonine. Residue threonine 15 is modified to Phosphothreonine. 5 helical membrane-spanning segments follow: residues 69-93 (LFEV…PHLA), 134-155 (LLGP…KDRN), 178-200 (KALY…RKIT), 255-275 (KPFA…LSYS), and 291-312 (WFNN…ASQA). Glutamate 367 provides a ligand contact to [CaMn4O5] cluster. A helical membrane pass occupies residues 447–471 (RARAAAAGFEKGIDRDFEPVLSMTP).

This sequence belongs to the PsbB/PsbC family. PsbC subfamily. PSII is composed of 1 copy each of membrane proteins PsbA, PsbB, PsbC, PsbD, PsbE, PsbF, PsbH, PsbI, PsbJ, PsbK, PsbL, PsbM, PsbT, PsbX, PsbY, PsbZ, Psb30/Ycf12, at least 3 peripheral proteins of the oxygen-evolving complex and a large number of cofactors. It forms dimeric complexes. It depends on Binds multiple chlorophylls and provides some of the ligands for the Ca-4Mn-5O cluster of the oxygen-evolving complex. It may also provide a ligand for a Cl- that is required for oxygen evolution. PSII binds additional chlorophylls, carotenoids and specific lipids. as a cofactor.

The protein resides in the plastid. It is found in the chloroplast thylakoid membrane. In terms of biological role, one of the components of the core complex of photosystem II (PSII). It binds chlorophyll and helps catalyze the primary light-induced photochemical processes of PSII. PSII is a light-driven water:plastoquinone oxidoreductase, using light energy to abstract electrons from H(2)O, generating O(2) and a proton gradient subsequently used for ATP formation. In Liriodendron tulipifera (Tuliptree), this protein is Photosystem II CP43 reaction center protein.